A 340-amino-acid chain; its full sequence is Heat-inducible transcription repressor HrcA (340 aa).

It belongs to the HrcA family.

Functionally, negative regulator of class I heat shock genes (grpE-dnaK-dnaJ and groELS operons). Prevents heat-shock induction of these operons. This chain is Heat-inducible transcription repressor HrcA, found in Phytoplasma australiense.